The primary structure comprises 500 residues: NAD(P)H-quinone oxidoreductase chain 4, chloroplastic (500 aa).

14 consecutive transmembrane segments (helical) span residues 4-24, 37-57, 87-107, 113-130, 134-154, 167-187, 211-231, 242-262, 272-292, 305-325, 330-350, 386-406, 416-436, and 462-482; these read FPWL…IFFL, ICIC…HFQL, IGPI…AWPV, LFHF…GLFS, LLLF…LLSM, FILY…GMGL, ILFY…IPLH, HYST…YGLV, AHSI…IYAA, IAYS…SITD, GAIL…FLAG, LALP…GIIT, ILIT…LLSM, and LFVS…PDFV.

This sequence belongs to the complex I subunit 4 family.

The protein localises to the plastid. The protein resides in the chloroplast thylakoid membrane. It catalyses the reaction a plastoquinone + NADH + (n+1) H(+)(in) = a plastoquinol + NAD(+) + n H(+)(out). The enzyme catalyses a plastoquinone + NADPH + (n+1) H(+)(in) = a plastoquinol + NADP(+) + n H(+)(out). The protein is NAD(P)H-quinone oxidoreductase chain 4, chloroplastic of Acorus calamus var. americanus (American sweet flag).